The following is a 359-amino-acid chain: MRLEISSPQTKLPYPKTEELPFTLQELRNAIPADCFEPSVVRSLGYFFLDVGLIAGFYALAAYLDSWFFYPIFWLIQGTLFWSLFVVGHDCGHGSFSKSKTLNNWIGHLSHTPILVPYHGWRISHRTHHANTGNIDTDESWYPVSEQKYNQMAWYEKLLRFYLPLIAYPIYLFRRSPNRQGSHFMPGSPLFRPGEKAAVLTSTFALAAFVGFLGFLTWQFGWLFLLKFYVAPYLVFVVWLDLVTFLHHTEDNIPWYRGDDWYFLKGALSTIDRDYGFINPIHHDIGTHVAHHIFSNMPHYKLRRATEAIKPILGEYYRYSDEPIWQAFFKSYWACHFVPNQGSGVYYQSPSNGGYQKKP.

2 helical membrane passes run 44–64 and 67–87; these read LGYFFLDVGLIAGFYALAAYL and WFFYPIFWLIQGTLFWSLFVV. The Histidine box-1 motif lies at 89 to 93; sequence HDCGH. The Histidine box-2 signature appears at 125–129; it reads HRTHH. 3 consecutive transmembrane segments (helical) span residues 153–173, 206–226, and 228–248; these read AWYEKLLRFYLPLIAYPIYLF, LAAFVGFLGFLTWQFGWLFLL, and FYVAPYLVFVVWLDLVTFLHH. Residues 291–295 carry the Histidine box-3 motif; it reads HHIFS.

Belongs to the fatty acid desaturase type 2 family. Requires Fe(2+) as cofactor.

It localises to the membrane. The enzyme catalyses a 1-[(9Z,12Z)-octadecdienoyl]-2-acyl-glycerolipid + 2 reduced [2Fe-2S]-[ferredoxin] + O2 + 2 H(+) = a 1-[(9Z,12Z,15Z)-octadectrienoyl]-2-acyl-glycerolipid + 2 oxidized [2Fe-2S]-[ferredoxin] + 2 H2O. It catalyses the reaction a 1-[(6Z,9Z,12Z)-octadectrienoyl]-2-acyl-glycerolipid + 2 reduced [2Fe-2S]-[ferredoxin] + O2 + 2 H(+) = a 1-[(6Z,9Z,12Z,15Z)-octadectetraenoyl]-2-acyl-glycerolipid + 2 oxidized [2Fe-2S]-[ferredoxin] + 2 H2O. It functions in the pathway lipid metabolism; polyunsaturated fatty acid biosynthesis. Functionally, desaturase involved in fatty acid biosynthesis. Introduces a double bond at carbon 15 of linoleoyl and gamma-linolenoyl groups attached to the sn-1 position of the glycerol moiety of membrane glycerolipids. The polypeptide is sn-1 acyl-lipid omega-3 desaturase (ferredoxin) (Synechocystis sp. (strain ATCC 27184 / PCC 6803 / Kazusa)).